The sequence spans 343 residues: RNA-binding protein 43 (343 aa).

An RRM domain is found at R15 to E90. Residues R170–A200 form a disordered region. Residues K184 to T194 show a composition bias toward polar residues.

The sequence is that of RNA-binding protein 43 (Rbm43) from Rattus norvegicus (Rat).